Consider the following 345-residue polypeptide: Ananain (345 aa).

Positions 1–24 (MTSKVQLVFLFLFLCVMWASPSAA) are cleaved as a signal peptide. A propeptide spans 25-122 (SCDEPSDPMM…VSFDDVDISS (98 aa)) (activation peptide). Intrachain disulfides connect cysteine 144–cysteine 184, cysteine 178–cysteine 217, and cysteine 273–cysteine 325. The active site involves cysteine 147. Cysteine 147 provides a ligand contact to E64. Active-site residues include histidine 279 and asparagine 300.

Stem (at protein level).

It catalyses the reaction Hydrolysis of proteins with broad specificity for peptide bonds. Best reported small molecule substrate Bz-Phe-Val-Arg-|-NHMec, but broader specificity than fruit bromelain.. Strongly inhibited by chicken egg-white cystatin. Inhibited by iodoacetamide and the active-site-directed inhibitor E64 (L-trans-epoxysuccinyl-leucylamide-(4-guanido)-butane). Functionally, cysteine protease. Displays a high level of diversity in substrate specificity at the P1-P1' cleavage site. A hydrophilic P1 residue is preferred, with Gln or Arg strongly preferred. Favors an Ile/Leu residue at the P2 position of substrates, with an overall higher preference for Leu. The optimal tripeptide for cleavage is Pro-Leu-Gln, with cleavage occurring after the Gln residue. Another optimal tripeptide is Val-Leu-Arg, which may imply that a hydrophobic residue at the P3 position of substrates is preferred. The sequence is that of Ananain from Ananas comosus (Pineapple).